Consider the following 367-residue polypeptide: Succinyl-diaminopimelate desuccinylase (367 aa).

Histidine 67 is a Zn(2+) binding site. Residue aspartate 69 is part of the active site. Residue aspartate 98 participates in Zn(2+) binding. The Proton acceptor role is filled by glutamate 128. The Zn(2+) site is built by glutamate 129, glutamate 157, and histidine 342.

Belongs to the peptidase M20A family. DapE subfamily. As to quaternary structure, homodimer. Requires Zn(2+) as cofactor. It depends on Co(2+) as a cofactor.

It carries out the reaction N-succinyl-(2S,6S)-2,6-diaminopimelate + H2O = (2S,6S)-2,6-diaminopimelate + succinate. It participates in amino-acid biosynthesis; L-lysine biosynthesis via DAP pathway; LL-2,6-diaminopimelate from (S)-tetrahydrodipicolinate (succinylase route): step 3/3. Functionally, catalyzes the hydrolysis of N-succinyl-L,L-diaminopimelic acid (SDAP), forming succinate and LL-2,6-diaminopimelate (DAP), an intermediate involved in the bacterial biosynthesis of lysine and meso-diaminopimelic acid, an essential component of bacterial cell walls. The protein is Succinyl-diaminopimelate desuccinylase of Campylobacter hominis (strain ATCC BAA-381 / DSM 21671 / CCUG 45161 / LMG 19568 / NCTC 13146 / CH001A).